Consider the following 457-residue polypeptide: Bifunctional protein GlmU (457 aa).

The interval 1-228 is pyrophosphorylase; sequence MEGLVTLILA…SEEITGVNSR (228 aa). UDP-N-acetyl-alpha-D-glucosamine-binding positions include 9-12, Lys23, Gln73, and 78-79; these read LAAG and GT. Asp102 serves as a coordination point for Mg(2+). Residues Gly139, Glu154, Asn169, and Asn226 each contribute to the UDP-N-acetyl-alpha-D-glucosamine site. Residue Asn226 coordinates Mg(2+). The interval 229-249 is linker; it reads VQLFEAEKIMRKRINYRHMEN. The segment at 250–457 is N-acetyltransferase; sequence GVTIVDPDTT…VQERIKKGRL (208 aa). The UDP-N-acetyl-alpha-D-glucosamine site is built by Arg331 and Lys349. His361 (proton acceptor) is an active-site residue. The UDP-N-acetyl-alpha-D-glucosamine site is built by Tyr364 and Asn375. Residues 384 to 385, Ala421, and Arg438 contribute to the acetyl-CoA site; that span reads NY.

The protein in the N-terminal section; belongs to the N-acetylglucosamine-1-phosphate uridyltransferase family. In the C-terminal section; belongs to the transferase hexapeptide repeat family. Homotrimer. It depends on Mg(2+) as a cofactor.

It localises to the cytoplasm. It carries out the reaction alpha-D-glucosamine 1-phosphate + acetyl-CoA = N-acetyl-alpha-D-glucosamine 1-phosphate + CoA + H(+). The enzyme catalyses N-acetyl-alpha-D-glucosamine 1-phosphate + UTP + H(+) = UDP-N-acetyl-alpha-D-glucosamine + diphosphate. It participates in nucleotide-sugar biosynthesis; UDP-N-acetyl-alpha-D-glucosamine biosynthesis; N-acetyl-alpha-D-glucosamine 1-phosphate from alpha-D-glucosamine 6-phosphate (route II): step 2/2. The protein operates within nucleotide-sugar biosynthesis; UDP-N-acetyl-alpha-D-glucosamine biosynthesis; UDP-N-acetyl-alpha-D-glucosamine from N-acetyl-alpha-D-glucosamine 1-phosphate: step 1/1. Its pathway is bacterial outer membrane biogenesis; LPS lipid A biosynthesis. Its function is as follows. Catalyzes the last two sequential reactions in the de novo biosynthetic pathway for UDP-N-acetylglucosamine (UDP-GlcNAc). The C-terminal domain catalyzes the transfer of acetyl group from acetyl coenzyme A to glucosamine-1-phosphate (GlcN-1-P) to produce N-acetylglucosamine-1-phosphate (GlcNAc-1-P), which is converted into UDP-GlcNAc by the transfer of uridine 5-monophosphate (from uridine 5-triphosphate), a reaction catalyzed by the N-terminal domain. The protein is Bifunctional protein GlmU of Thermoanaerobacter pseudethanolicus (strain ATCC 33223 / 39E) (Clostridium thermohydrosulfuricum).